A 140-amino-acid chain; its full sequence is Large-conductance mechanosensitive channel (140 aa).

A run of 2 helical transmembrane segments spans residues 16 to 36 (VIDL…VTAL) and 84 to 104 (INTV…VKLI).

Belongs to the MscL family. Homopentamer.

Its subcellular location is the cell inner membrane. In terms of biological role, channel that opens in response to stretch forces in the membrane lipid bilayer. May participate in the regulation of osmotic pressure changes within the cell. The protein is Large-conductance mechanosensitive channel of Xanthomonas oryzae pv. oryzae (strain MAFF 311018).